A 133-amino-acid chain; its full sequence is Oocytes ribonuclease (133 aa).

The N-terminal stretch at 1-22 is a signal peptide; that stretch reads MCAKSLLLVFGILLGLSHLSLS. The residue at position 23 (Gln23) is a Pyrrolidone carboxylic acid. The Proton acceptor role is filled by His32. Intrachain disulfides connect Cys41–Cys93, Cys56–Cys103, Cys74–Cys118, and Cys115–Cys132. 57 to 61 is a substrate binding site; it reads KRVNT. The Proton donor role is filled by His125.

Belongs to the pancreatic ribonuclease family. In terms of assembly, monomer.

The protein resides in the secreted. Its function is as follows. Preferentially cleaves single-stranded RNA at pyrimidine residues with a 3'flanking guanine. Hydrolyzes poly(U) and poly(C) as substrates, and prefers the former. The S-lectins in frog eggs may be involved in the fertilization and development of the frog embryo. This lectin agglutinates various animal cells, including normal lymphocytes, erythrocytes, and fibroblasts of animal and human origin. It is cytotoxic against several tumor cells. The chain is Oocytes ribonuclease (RCR) from Aquarana catesbeiana (American bullfrog).